Reading from the N-terminus, the 445-residue chain is MRLSRYFLPVLKENPSEAQIVSHRFMLRAGMIKQQAAGIYSWLPLGFKALKRVEQIVHEEQIRAGHIPLLMPTLQPADLWRESGRYDDYGEEMLRITDRHKRDMLYGPTNEEMITDIFRSHVNSYKDLPLTLYHVQWKFRDEIRPRFGVMRGREFLMKDGYNFDLDFDSAIHAYNRHMVSYLRTYERMGLQAIPMRAASGPIGGDNTHEFLVLASTGESEVFYDAAITDLKFGDRVVDYDSREECEAIVKEWTTPYARTDETHDEAIFNAIPEERRRTSRGIEVGQIFYFGTKYSEPMGATVVTADGARVPVHMGSHGIGVSRLLGAIIEASHDDKGIIWPEGVTPFHVGIVNLKQGDSSTDLACEALYRDLSAKGLEPLYDDRDERAGAKFATMDLIGLPWRITVGPRGIAAGKVELTNRRTGESEEMSSGAAVDRLAQIYAGI.

The protein belongs to the class-II aminoacyl-tRNA synthetase family. ProS type 2 subfamily. In terms of assembly, homodimer.

It localises to the cytoplasm. The catalysed reaction is tRNA(Pro) + L-proline + ATP = L-prolyl-tRNA(Pro) + AMP + diphosphate. Functionally, catalyzes the attachment of proline to tRNA(Pro) in a two-step reaction: proline is first activated by ATP to form Pro-AMP and then transferred to the acceptor end of tRNA(Pro). In Cereibacter sphaeroides (strain ATCC 17025 / ATH 2.4.3) (Rhodobacter sphaeroides), this protein is Proline--tRNA ligase.